Reading from the N-terminus, the 201-residue chain is Pyridoxal 5'-phosphate synthase subunit PdxT (201 aa).

49–51 (GES) contacts L-glutamine. The active-site Nucleophile is the Cys81. Residues Arg110 and 139 to 140 (IR) each bind L-glutamine. Catalysis depends on charge relay system residues His180 and Glu182.

Belongs to the glutaminase PdxT/SNO family. In terms of assembly, in the presence of PdxS, forms a dodecamer of heterodimers. Only shows activity in the heterodimer.

It catalyses the reaction aldehydo-D-ribose 5-phosphate + D-glyceraldehyde 3-phosphate + L-glutamine = pyridoxal 5'-phosphate + L-glutamate + phosphate + 3 H2O + H(+). The enzyme catalyses L-glutamine + H2O = L-glutamate + NH4(+). It functions in the pathway cofactor biosynthesis; pyridoxal 5'-phosphate biosynthesis. Its function is as follows. Catalyzes the hydrolysis of glutamine to glutamate and ammonia as part of the biosynthesis of pyridoxal 5'-phosphate. The resulting ammonia molecule is channeled to the active site of PdxS. The sequence is that of Pyridoxal 5'-phosphate synthase subunit PdxT from Salinispora tropica (strain ATCC BAA-916 / DSM 44818 / JCM 13857 / NBRC 105044 / CNB-440).